Reading from the N-terminus, the 798-residue chain is Galactinol--sucrose galactosyltransferase (798 aa).

The protein belongs to the glycosyl hydrolases 36 family.

It catalyses the reaction alpha-D-galactosyl-(1-&gt;3)-1D-myo-inositol + sucrose = raffinose + myo-inositol. Inhibited by 1-deoxygalactonojirimycin. Not inhibited by stachyose. Strong inhibition of the hydrolytic activity by sucrose. Its function is as follows. Transglycosidase operating by a ping-pong reaction mechanism. Involved in the synthesis of raffinose, a major soluble carbohydrate in seeds, roots and tubers. Able to utilize D-ononitol and D-pinitol as acceptors. May also act as a glycoside hydrolase. The chain is Galactinol--sucrose galactosyltransferase (RFS) from Pisum sativum (Garden pea).